We begin with the raw amino-acid sequence, 488 residues long: E3 ubiquitin-protein ligase TRIM34 (488 aa).

The RING-type zinc finger occupies 15 to 60 (CPICLELLTEPLSLDCGHSLCRACITVSNKEAVTSMGGKSSCPVCG). Residues 92–134 (KKRDLCDHHGEKLLLFCKEDRKVICWLCERSQEHRGHHTVLTE) form a B box-type zinc finger. Zn(2+) is bound by residues Cys-97, His-100, Cys-119, and His-125. Residues 131 to 239 (VLTEEVFKEC…VRELISDVEC (109 aa)) adopt a coiled-coil conformation. Positions 283-488 (LSRMLQMFRE…APMTLCPPSS (206 aa)) constitute a B30.2/SPRY domain.

It belongs to the TRIM/RBCC family. Homotrimer. Interacts (via B-box and SPRY domain) with TRIM5. As to quaternary structure, (Microbial infection) Interacts (via the B30.2/SPRY domain) with HIV-1 capsid complexes. Is the most abundant form. It is highly expressed in the placenta, spleen, colon and peripheral blood leukocytes.

It localises to the cytoplasm. Its subcellular location is the mitochondrion. The catalysed reaction is S-ubiquitinyl-[E2 ubiquitin-conjugating enzyme]-L-cysteine + [acceptor protein]-L-lysine = [E2 ubiquitin-conjugating enzyme]-L-cysteine + N(6)-ubiquitinyl-[acceptor protein]-L-lysine.. Its pathway is protein modification; protein ubiquitination. Functions as antiviral protein and contributes to the defense against retroviral infections. Acts as a capsid-specific restriction factor with the help of TRIM5 and prevents infection from non-host-adapted retroviruses. During influenza A virus infection, promotes programmed cell death by targeting ZBP1 for 'Lys-63'-linked polyubiquitination. In turn, promotes ZBP1 recruitment of RIPK3 to mediate virus-induced programmed necrosis. Negatively regulates the function of mitochondria by enhancing mitochondrial depolarization leading to cytochrome c release and mitochondria-dependent apoptosis. Also promotes the formation of multinucleated giant cells by means of cell fusion and phagocytosis in epithelial cells. This Homo sapiens (Human) protein is E3 ubiquitin-protein ligase TRIM34 (TRIM34).